Reading from the N-terminus, the 334-residue chain is D-fructose 1,6-bisphosphatase class 2/sedoheptulose 1,7-bisphosphatase (334 aa).

Mn(2+) contacts are provided by Asp-33, Glu-57, Asp-85, and Glu-88. Substrate contacts are provided by residues 88-90 (EGT), Tyr-119, 164-166 (RAR), and 186-188 (DGD). A Mn(2+)-binding site is contributed by Glu-213.

This sequence belongs to the FBPase class 2 family. Homotetramer. Mn(2+) is required as a cofactor.

The enzyme catalyses beta-D-fructose 1,6-bisphosphate + H2O = beta-D-fructose 6-phosphate + phosphate. It catalyses the reaction D-sedoheptulose 1,7-bisphosphate + H2O = D-sedoheptulose 7-phosphate + phosphate. It functions in the pathway carbohydrate biosynthesis; Calvin cycle. Catalyzes the hydrolysis of fructose 1,6-bisphosphate (Fru 1,6-P2) and sedoheptulose 1,7-bisphosphate (Sed 1,7-P2) to fructose 6-phosphate and sedoheptulose 7-phosphate, respectively. In Synechococcus sp. (strain CC9902), this protein is D-fructose 1,6-bisphosphatase class 2/sedoheptulose 1,7-bisphosphatase.